The primary structure comprises 171 residues: Adenine phosphoribosyltransferase (171 aa).

It belongs to the purine/pyrimidine phosphoribosyltransferase family. As to quaternary structure, homodimer.

It localises to the cytoplasm. It catalyses the reaction AMP + diphosphate = 5-phospho-alpha-D-ribose 1-diphosphate + adenine. Its pathway is purine metabolism; AMP biosynthesis via salvage pathway; AMP from adenine: step 1/1. Functionally, catalyzes a salvage reaction resulting in the formation of AMP, that is energically less costly than de novo synthesis. This chain is Adenine phosphoribosyltransferase, found in Geobacter metallireducens (strain ATCC 53774 / DSM 7210 / GS-15).